A 1551-amino-acid chain; its full sequence is Envelopment polyprotein (1551 aa).

A signal peptide spans 1 to 17 (MSKRVLIIAVVVYLVFT). The Lumenal portion of the chain corresponds to 18 to 546 (TQNQITGNHT…CRMSSRPTVA (529 aa)). Residues 24-66 (GNHTTINSSSPSTTEASSTPTVSRTPQTTTTSTAVSTTITATT) are disordered. N-linked (GlcNAc...) asparagine; by host glycans are attached at residues asparagine 25 and asparagine 30. Residues 31–66 (SSSPSTTEASSTPTVSRTPQTTTTSTAVSTTITATT) are compositionally biased toward low complexity. N-linked (GlcNAc...) asparagine; by host glycosylation is found at asparagine 80, asparagine 142, and asparagine 413. The helical transmembrane segment at 547 to 567 (LLLGIWIGCGYILTCIFSFLL) threads the bilayer. Topologically, residues 568-675 (YHLILFFANC…ISVGIFLKRT (108 aa)) are cytoplasmic. A helical membrane pass occupies residues 676-696 (TWLVVLLVLLGLAISPVQGAP). Topologically, residues 697–704 (TEVSNVKQ) are lumenal. The chain crosses the membrane as a helical span at residues 705 to 725 (DGDYSICYFIFGCLVTAALLL). The Cytoplasmic segment spans residues 726 to 823 (KVKRTNSNGI…REKLFTTGLQ (98 aa)). The chain crosses the membrane as a helical span at residues 824–844 (LFINKTNVVVFALIMCFLLLL). Residues 845–1451 (TGHNASAFDS…GDFFKHYIGS (607 aa)) are Lumenal-facing. 4 N-linked (GlcNAc...) asparagine; by host glycosylation sites follow: asparagine 848, asparagine 1201, asparagine 1258, and asparagine 1420. Cysteine 1023 and cysteine 1216 are joined by a disulfide. A helical membrane pass occupies residues 1452–1472 (IAVGVLGTVLPFALLILFFIY). The Cytoplasmic portion of the chain corresponds to 1473–1551 (GDKMLWPFKV…KKEKKLSEIA (79 aa)).

Belongs to the nairovirus envelope glycoprotein family. Heterodimer with glycoprotein C; in prefusion state. As to quaternary structure, heterodimer with glycoprotein N; in prefusion state. Homotrimeric; in postfusion state. Post-translationally, specific enzymatic cleavage by host MBTPS1/S1P/SKI-1 endopeptidase yield glycoprotein N. Specific enzymatic cleavages by host furin-like protease and MBTPS1/S1P endopeptidase yield GP38. In terms of processing, glycosylated.

It localises to the host endoplasmic reticulum membrane. Its subcellular location is the virion membrane. The protein resides in the host Golgi apparatus membrane. In terms of biological role, glycoprotein N and glycoprotein C interact with each other and are present at the surface of the virion. Glycoprotein N probably locks the Gn-Gc complex in a prefusion state. Glycoprotein N and glycoprotein C are able to attach the virion to host cell receptors. This attachment induces virion internalization predominantly through clathrin-dependent endocytosis. Glycoprotein C and glycoprotein N interact with each other and are present at the surface of the virion. The spikes at the surface of the virion are formed by an N-terminal extension of glycoprotein C. Glycoprotein N and glycoprotein C are able to attach the virion to host cell receptors. This attachment induces virion internalization predominantly through clathrin-dependent endocytosis. Class II fusion protein that promotes fusion of viral membrane with host endosomal membrane after endocytosis of the virion. Exposure to potassium is necessary for the conformational change leading to fusion. The chain is Envelopment polyprotein (GP) from Amblyomma variegatum (Tropical bont tick).